The sequence spans 444 residues: Platelet-activating factor acetylhydrolase (444 aa).

Residues 1–21 (MLPSKLHALFCLCTCLALVYP) form the signal peptide. Residues Asn60 and Asn200 are each glycosylated (N-linked (GlcNAc...) asparagine). The active-site Nucleophile is Ser274. Residues Asp297 and His352 each act as charge relay system in the active site. Asn424 and Asn434 each carry an N-linked (GlcNAc...) asparagine glycan.

Belongs to the AB hydrolase superfamily. Lipase family. N-glycosylated. Plasma.

The protein resides in the secreted. The protein localises to the extracellular space. The enzyme catalyses a 1-O-alkyl-2-acetyl-sn-glycero-3-phosphocholine + H2O = a 1-O-alkyl-sn-glycero-3-phosphocholine + acetate + H(+). The catalysed reaction is 1-O-decyl-2-acetyl-sn-glycero-3-phosphocholine + H2O = 1-O-decyl-sn-glycero-3-phosphocholine + acetate + H(+). It carries out the reaction 1-O-dodecyl-2-acetyl-sn-glycero-3-phosphocholine + H2O = 1-O-dodecyl-sn-glycero-3-phosphocholine + acetate + H(+). It catalyses the reaction 1-O-tetradecyl-2-acetyl-sn-glycero-3-phosphocholine + H2O = 1-O-tetradecyl-sn-glycero-3-phosphocholine + acetate + H(+). The enzyme catalyses 1-O-hexadecyl-2-acetyl-sn-glycero-3-phosphocholine + H2O = 1-O-hexadecyl-sn-glycero-3-phosphocholine + acetate + H(+). The catalysed reaction is 1-O-octadecyl-2-acetyl-sn-glycero-3-phosphocholine + H2O = 1-O-octadecyl-sn-glycero-3-phosphocholine + acetate + H(+). It carries out the reaction 1-hexadecanoyl-2-acetyl-sn-glycero-3-phosphocholine + H2O = 1-hexadecanoyl-sn-glycero-3-phosphocholine + acetate + H(+). It catalyses the reaction 1-hexadecanoyl-2-propionyl-sn-glycero-3-phosphocholine + H2O = propanoate + 1-hexadecanoyl-sn-glycero-3-phosphocholine + H(+). The enzyme catalyses 1-hexadecanoyl-2-butanoyl-sn-glycero-3-phosphocholine + H2O = butanoate + 1-hexadecanoyl-sn-glycero-3-phosphocholine + H(+). The catalysed reaction is 1-hexadecanoyl-2-pentanoyl-sn-glycero-3-phosphocholine + H2O = pentanoate + 1-hexadecanoyl-sn-glycero-3-phosphocholine + H(+). It carries out the reaction 1-hexadecanoyl-2-glutaroyl-sn-glycero-3-phosphocholine + H2O = glutarate + 1-hexadecanoyl-sn-glycero-3-phosphocholine + H(+). It catalyses the reaction 1-hexadecanoyl-2-(5-oxopentanoyl)-sn-glycero-3-phosphocholine + H2O = 5-oxopentanoate + 1-hexadecanoyl-sn-glycero-3-phosphocholine + H(+). The enzyme catalyses 1-hexadecanoyl-2-(9-oxononanoyl)-sn-glycero-3-phosphocholine + H2O = 9-oxononanoate + 1-hexadecanoyl-sn-glycero-3-phosphocholine + H(+). The catalysed reaction is 1-hexadecanoyl-2-[9-hydroperoxy-(10E-octadecenoyl)]-sn-glycero-3-phosphocholine + H2O = 9-hydroperoxy-10E-octadecenoate + 1-hexadecanoyl-sn-glycero-3-phosphocholine + H(+). It carries out the reaction 1-hexadecanoyl-2-(10-hydroperoxy-8E-octadecenoyl)-sn-glycero-3-phosphocholine + H2O = 10-hydroperoxy-(8E)-octadecenoate + 1-hexadecanoyl-sn-glycero-3-phosphocholine + H(+). Lipoprotein-associated calcium-independent phospholipase A2 involved in phospholipid catabolism during inflammatory and oxidative stress response. At the lipid-aqueous interface, hydrolyzes the ester bond of fatty acyl group attached at sn-2 position of phospholipids (phospholipase A2 activity). Specifically targets phospholipids with a short-chain fatty acyl group at sn-2 position. Can hydrolyze phospholipids with long fatty acyl chains, only if they carry oxidized functional groups. Hydrolyzes and inactivates platelet-activating factor (PAF, 1-O-alkyl-2-acetyl-sn-glycero-3-phosphocholine), a potent pro-inflammatory signaling lipid that acts through PTAFR on various innate immune cells. Hydrolyzes oxidatively truncated phospholipids carrying an aldehyde group at omega position, preventing their accumulation in low-density lipoprotein (LDL) particles and uncontrolled pro-inflammatory effects. As part of high-density lipoprotein (HDL) particles, can hydrolyze phospholipids having long-chain fatty acyl hydroperoxides at sn-2 position and protect against potential accumulation of these oxylipins in the vascular wall. Catalyzes the release from membrane phospholipids of F2-isoprostanes, lipid biomarkers of cellular oxidative damage. This chain is Platelet-activating factor acetylhydrolase (PLA2G7), found in Bos taurus (Bovine).